A 453-amino-acid chain; its full sequence is Glutamyl-tRNA reductase (453 aa).

Residues Thr54–Arg57, Ser113, Glu118–Gln120, and Gln124 each bind substrate. The active-site Nucleophile is the Cys55. Gly193 to Ser198 is an NADP(+) binding site.

It belongs to the glutamyl-tRNA reductase family. As to quaternary structure, homodimer.

The catalysed reaction is (S)-4-amino-5-oxopentanoate + tRNA(Glu) + NADP(+) = L-glutamyl-tRNA(Glu) + NADPH + H(+). The protein operates within porphyrin-containing compound metabolism; protoporphyrin-IX biosynthesis; 5-aminolevulinate from L-glutamyl-tRNA(Glu): step 1/2. It functions in the pathway porphyrin-containing compound metabolism; chlorophyll biosynthesis. Its function is as follows. Catalyzes the NADPH-dependent reduction of glutamyl-tRNA(Glu) to glutamate 1-semialdehyde (GSA). The protein is Glutamyl-tRNA reductase of Chloroflexus aggregans (strain MD-66 / DSM 9485).